The chain runs to 334 residues: MQTEQLISQLFDGQHLNQEQIQQLFHYIIQGQLSNEQLAGVLIALKFRGEQTDEISGAVKAIIANAKPFPFIDYPFADIVGTGGDNANTINISTTAAIVAATLGYKVVKHGNRSVSSKSGASDVLNALGIKIDLSAEKSKQALDNLNLCFLWAQQYHLGFKHVAPVRQILKTRTIFNILGPLCNPARPKHQLLGVYTPHLLKIYAESALRLGHQHSIVIHGSGLDEVAIHGKTDVAEICHGKIEYYSLTPHDFGFTPKPLETLRGGTAEENAKILTALLQGKGKDEHNQAVAMNTALLMKLFGNDDIKANAEKALNIMANGKAFETLNQLKLYQ.

5-phospho-alpha-D-ribose 1-diphosphate is bound by residues Gly-81, 84–85 (GD), Thr-89, 91–94 (NIST), 109–117 (KHGNRSVSS), and Ala-121. Residue Gly-81 participates in anthranilate binding. Ser-93 is a Mg(2+) binding site. An anthranilate-binding site is contributed by Asn-112. An anthranilate-binding site is contributed by Arg-167. 2 residues coordinate Mg(2+): Asp-225 and Glu-226.

The protein belongs to the anthranilate phosphoribosyltransferase family. Homodimer. Mg(2+) is required as a cofactor.

The catalysed reaction is N-(5-phospho-beta-D-ribosyl)anthranilate + diphosphate = 5-phospho-alpha-D-ribose 1-diphosphate + anthranilate. The protein operates within amino-acid biosynthesis; L-tryptophan biosynthesis; L-tryptophan from chorismate: step 2/5. In terms of biological role, catalyzes the transfer of the phosphoribosyl group of 5-phosphorylribose-1-pyrophosphate (PRPP) to anthranilate to yield N-(5'-phosphoribosyl)-anthranilate (PRA). The sequence is that of Anthranilate phosphoribosyltransferase from Histophilus somni (strain 2336) (Haemophilus somnus).